The sequence spans 360 residues: MLYHLAMALEGVYSGFNVFQYLTFRTILGVLTALGIALLVGPAVIQRLVEHQIGQQVRDDGPQSHLSKAGTPTMGGALILVAIAVATLLWSDLTNRYVWVVLLTTLAFGVIGGVDDYRKLALGNSKGLSARAKFFWQTVVALMAAVFLFSTAQSPLETSLIVPLFKDVVLPLGLLFIPLVWLVVVGSSNAVNLTDGLDGLAILPSVLVAGGLAVFAYATGHAVFADYLGIPFVAGAGEVVVFCGALIGAGLGFLWFNTYPAQVFMGDVGALALGAALGILAVVVRQELVLLIMGGVFVVETLSVMLQVASYKLTGRRIFRMAPLHHHFELKGWPEPRVIVRFWIITVVLVLVGLAMLKVR.

The next 10 membrane-spanning stretches (helical) occupy residues 26–46, 70–90, 97–117, 132–152, 168–188, 199–219, 236–256, 263–283, 288–308, and 338–358; these read TILG…AVIQ, GTPT…TLLW, YVWV…VDDY, AKFF…FSTA, VVLP…VGSS, GLAI…AYAT, AGEV…FLWF, VFMG…LAVV, LVLL…MLQV, and VIVR…AMLK.

This sequence belongs to the glycosyltransferase 4 family. MraY subfamily. It depends on Mg(2+) as a cofactor.

Its subcellular location is the cell inner membrane. It carries out the reaction UDP-N-acetyl-alpha-D-muramoyl-L-alanyl-gamma-D-glutamyl-meso-2,6-diaminopimeloyl-D-alanyl-D-alanine + di-trans,octa-cis-undecaprenyl phosphate = di-trans,octa-cis-undecaprenyl diphospho-N-acetyl-alpha-D-muramoyl-L-alanyl-D-glutamyl-meso-2,6-diaminopimeloyl-D-alanyl-D-alanine + UMP. Its pathway is cell wall biogenesis; peptidoglycan biosynthesis. Catalyzes the initial step of the lipid cycle reactions in the biosynthesis of the cell wall peptidoglycan: transfers peptidoglycan precursor phospho-MurNAc-pentapeptide from UDP-MurNAc-pentapeptide onto the lipid carrier undecaprenyl phosphate, yielding undecaprenyl-pyrophosphoryl-MurNAc-pentapeptide, known as lipid I. The polypeptide is Phospho-N-acetylmuramoyl-pentapeptide-transferase (Alkalilimnicola ehrlichii (strain ATCC BAA-1101 / DSM 17681 / MLHE-1)).